Consider the following 387-residue polypeptide: 3-ketoacyl-CoA thiolase (387 aa).

Cys91 acts as the Acyl-thioester intermediate in catalysis. Residues His343 and Cys373 each act as proton acceptor in the active site.

It belongs to the thiolase-like superfamily. Thiolase family. As to quaternary structure, heterotetramer of two alpha chains (FadB) and two beta chains (FadA).

Its subcellular location is the cytoplasm. It carries out the reaction an acyl-CoA + acetyl-CoA = a 3-oxoacyl-CoA + CoA. Its pathway is lipid metabolism; fatty acid beta-oxidation. Its function is as follows. Catalyzes the final step of fatty acid oxidation in which acetyl-CoA is released and the CoA ester of a fatty acid two carbons shorter is formed. This is 3-ketoacyl-CoA thiolase from Aliivibrio fischeri (strain ATCC 700601 / ES114) (Vibrio fischeri).